The following is a 149-amino-acid chain: Deoxyuridine 5'-triphosphate nucleotidohydrolase (149 aa).

Residues 66 to 68 (RSG), Asn79, 83 to 85 (TID), and Lys93 contribute to the substrate site.

Belongs to the dUTPase family. Requires Mg(2+) as cofactor.

The catalysed reaction is dUTP + H2O = dUMP + diphosphate + H(+). It functions in the pathway pyrimidine metabolism; dUMP biosynthesis; dUMP from dCTP (dUTP route): step 2/2. Functionally, this enzyme is involved in nucleotide metabolism: it produces dUMP, the immediate precursor of thymidine nucleotides and it decreases the intracellular concentration of dUTP so that uracil cannot be incorporated into DNA. The chain is Deoxyuridine 5'-triphosphate nucleotidohydrolase from Corynebacterium glutamicum (strain ATCC 13032 / DSM 20300 / JCM 1318 / BCRC 11384 / CCUG 27702 / LMG 3730 / NBRC 12168 / NCIMB 10025 / NRRL B-2784 / 534).